The primary structure comprises 503 residues: Cobyric acid synthase (503 aa).

The GATase cobBQ-type domain maps to 255–444 (DIDIAVIRYP…FHDLFHNDAF (190 aa)). Cysteine 337 acts as the Nucleophile in catalysis. Histidine 436 is a catalytic residue.

Belongs to the CobB/CobQ family. CobQ subfamily.

Its pathway is cofactor biosynthesis; adenosylcobalamin biosynthesis. In terms of biological role, catalyzes amidations at positions B, D, E, and G on adenosylcobyrinic A,C-diamide. NH(2) groups are provided by glutamine, and one molecule of ATP is hydrogenolyzed for each amidation. This is Cobyric acid synthase from Geobacillus sp. (strain WCH70).